The following is a 116-amino-acid chain: Flagellar transcriptional regulator FlhD (116 aa).

The protein belongs to the FlhD family. Homodimer; disulfide-linked. Forms a heterohexamer composed of two FlhC and four FlhD subunits. Each FlhC binds a FlhD dimer, forming a heterotrimer, and a hexamer assembles by dimerization of two heterotrimers.

The protein resides in the cytoplasm. Functionally, functions in complex with FlhC as a master transcriptional regulator that regulates transcription of several flagellar and non-flagellar operons by binding to their promoter region. Activates expression of class 2 flagellar genes, including fliA, which is a flagellum-specific sigma factor that turns on the class 3 genes. Also regulates genes whose products function in a variety of physiological pathways. The chain is Flagellar transcriptional regulator FlhD from Serratia proteamaculans (strain 568).